The sequence spans 369 residues: 4-hydroxy-3-methylbut-2-en-1-yl diphosphate synthase (flavodoxin) (369 aa).

[4Fe-4S] cluster-binding residues include Cys-270, Cys-273, Cys-305, and Glu-312.

This sequence belongs to the IspG family. It depends on [4Fe-4S] cluster as a cofactor.

It carries out the reaction (2E)-4-hydroxy-3-methylbut-2-enyl diphosphate + oxidized [flavodoxin] + H2O + 2 H(+) = 2-C-methyl-D-erythritol 2,4-cyclic diphosphate + reduced [flavodoxin]. It participates in isoprenoid biosynthesis; isopentenyl diphosphate biosynthesis via DXP pathway; isopentenyl diphosphate from 1-deoxy-D-xylulose 5-phosphate: step 5/6. In terms of biological role, converts 2C-methyl-D-erythritol 2,4-cyclodiphosphate (ME-2,4cPP) into 1-hydroxy-2-methyl-2-(E)-butenyl 4-diphosphate. In Pseudomonas savastanoi pv. phaseolicola (strain 1448A / Race 6) (Pseudomonas syringae pv. phaseolicola (strain 1448A / Race 6)), this protein is 4-hydroxy-3-methylbut-2-en-1-yl diphosphate synthase (flavodoxin).